We begin with the raw amino-acid sequence, 85 residues long: Putative sodium channel toxin Ts37 (85 aa).

The N-terminal stretch at 1-20 (MAGEWACLLVSLVLLWGAAG) is a signal peptide. An LCN-type CS-alpha/beta domain is found at 22–83 (RDGFLLDRNF…KIWGDSVRCR (62 aa)). 4 disulfides stabilise this stretch: Cys32-Cys82, Cys36-Cys59, Cys45-Cys64, and Cys49-Cys66.

The protein belongs to the long (4 C-C) scorpion toxin superfamily. Sodium channel inhibitor family. As to expression, expressed by the venom gland.

It is found in the secreted. In terms of biological role, putative sodium channel toxin. This chain is Putative sodium channel toxin Ts37, found in Tityus serrulatus (Brazilian scorpion).